The primary structure comprises 201 residues: U1 small nuclear ribonucleoprotein C (201 aa).

The Matrin-type zinc-finger motif lies at 4–36 (YYCEYCDIYLTHSSPVGRRQHNQGRKHISAKIE). Positions 137–154 (IQKPYNNFDNKNNNYNNK) are enriched in low complexity. Residues 137–176 (IQKPYNNFDNKNNNYNNKPITNSSYKNDKQDYRNNNENND) form a disordered region.

It belongs to the U1 small nuclear ribonucleoprotein C family. As to quaternary structure, U1 snRNP is composed of the 7 core Sm proteins B/B', D1, D2, D3, E, F and G that assemble in a heptameric protein ring on the Sm site of the small nuclear RNA to form the core snRNP, and at least 3 U1 snRNP-specific proteins U1-70K, U1-A and U1-C. U1-C interacts with U1 snRNA and the 5' splice-site region of the pre-mRNA.

The protein localises to the nucleus. Functionally, component of the spliceosomal U1 snRNP, which is essential for recognition of the pre-mRNA 5' splice-site and the subsequent assembly of the spliceosome. U1-C is directly involved in initial 5' splice-site recognition for both constitutive and regulated alternative splicing. The interaction with the 5' splice-site seems to precede base-pairing between the pre-mRNA and the U1 snRNA. Stimulates commitment or early (E) complex formation by stabilizing the base pairing of the 5' end of the U1 snRNA and the 5' splice-site region. This chain is U1 small nuclear ribonucleoprotein C, found in Plasmodium yoelii yoelii.